Reading from the N-terminus, the 190-residue chain is Potassium-transporting ATPase KdpC subunit (190 aa).

Residues 10 to 30 traverse the membrane as a helical segment; that stretch reads TFLFLLLITGGVYPLLTTALG.

This sequence belongs to the KdpC family. In terms of assembly, the system is composed of three essential subunits: KdpA, KdpB and KdpC.

The protein resides in the cell inner membrane. Part of the high-affinity ATP-driven potassium transport (or Kdp) system, which catalyzes the hydrolysis of ATP coupled with the electrogenic transport of potassium into the cytoplasm. This subunit acts as a catalytic chaperone that increases the ATP-binding affinity of the ATP-hydrolyzing subunit KdpB by the formation of a transient KdpB/KdpC/ATP ternary complex. The chain is Potassium-transporting ATPase KdpC subunit from Escherichia coli O6:H1 (strain CFT073 / ATCC 700928 / UPEC).